We begin with the raw amino-acid sequence, 644 residues long: Exoribonuclease 2 (644 aa).

One can recognise an RNB domain in the interval 189–516; the sequence is RQDLTALNFV…NHRLLKAAIK (328 aa). In terms of domain architecture, S1 motif spans 561-643; the sequence is DTRFAAEIID…ETRSIIARPV (83 aa).

This sequence belongs to the RNR ribonuclease family. RNase II subfamily.

It localises to the cytoplasm. The enzyme catalyses Exonucleolytic cleavage in the 3'- to 5'-direction to yield nucleoside 5'-phosphates.. Involved in mRNA degradation. Hydrolyzes single-stranded polyribonucleotides processively in the 3' to 5' direction. The sequence is that of Exoribonuclease 2 from Escherichia fergusonii (strain ATCC 35469 / DSM 13698 / CCUG 18766 / IAM 14443 / JCM 21226 / LMG 7866 / NBRC 102419 / NCTC 12128 / CDC 0568-73).